Here is a 411-residue protein sequence, read N- to C-terminus: Pyridinium-3,5-bisthiocarboxylic acid mononucleotide nickel insertion protein (411 aa).

The protein belongs to the LarC family.

The enzyme catalyses Ni(II)-pyridinium-3,5-bisthiocarboxylate mononucleotide = pyridinium-3,5-bisthiocarboxylate mononucleotide + Ni(2+). Involved in the biosynthesis of a nickel-pincer cofactor ((SCS)Ni(II) pincer complex). Binds Ni(2+), and functions in nickel delivery to pyridinium-3,5-bisthiocarboxylic acid mononucleotide (P2TMN), to form the mature cofactor. Is thus probably required for the activation of nickel-pincer cofactor-dependent enzymes. The protein is Pyridinium-3,5-bisthiocarboxylic acid mononucleotide nickel insertion protein of Geobacillus kaustophilus (strain HTA426).